We begin with the raw amino-acid sequence, 162 residues long: HTH-type transcriptional regulator IscR (162 aa).

The HTH rrf2-type domain maps to 2 to 131; the sequence is RLTSKGRYAV…NNITLGELVN (130 aa). The H-T-H motif DNA-binding region spans 28 to 51; it reads LADISERQGISLSYLEQLFSRLRK. Residues cysteine 92, cysteine 98, and cysteine 104 each coordinate [2Fe-2S] cluster. The segment at 141-162 is disordered; the sequence is RQHNEAHRPTRAQDAIDVKLRA.

Requires [2Fe-2S] cluster as cofactor.

Regulates the transcription of several operons and genes involved in the biogenesis of Fe-S clusters and Fe-S-containing proteins. The protein is HTH-type transcriptional regulator IscR of Cronobacter sakazakii (strain ATCC BAA-894) (Enterobacter sakazakii).